Consider the following 122-residue polypeptide: Small ribosomal subunit protein uS13 (122 aa).

The segment at 95–122 is disordered; that stretch reads GLPVRGQRTHTNARTRKGPAKPIAGKKK.

It belongs to the universal ribosomal protein uS13 family. Part of the 30S ribosomal subunit. Forms a loose heterodimer with protein S19. Forms two bridges to the 50S subunit in the 70S ribosome.

In terms of biological role, located at the top of the head of the 30S subunit, it contacts several helices of the 16S rRNA. In the 70S ribosome it contacts the 23S rRNA (bridge B1a) and protein L5 of the 50S subunit (bridge B1b), connecting the 2 subunits; these bridges are implicated in subunit movement. Contacts the tRNAs in the A and P-sites. The chain is Small ribosomal subunit protein uS13 from Caulobacter vibrioides (strain ATCC 19089 / CIP 103742 / CB 15) (Caulobacter crescentus).